Reading from the N-terminus, the 763-residue chain is Autophagy-related protein 18f (763 aa).

WD repeat units lie at residues 345–385 and 402–441; these read AHKS…STSR and FTNA…EGDA. A compositionally biased stretch (polar residues) spans 701 to 711; that stretch reads NESIQSPSTTT. The disordered stretch occupies residues 701–763; the sequence is NESIQSPSTT…SEDEDEEQVD (63 aa). Composition is skewed to basic and acidic residues over residues 712-725 and 741-754; these read QDDK…HGTE and PVDK…KNHS.

The protein belongs to the WD repeat PROPPIN family. In terms of assembly, component of the PI(3,5)P2 regulatory complex at least composed of ATG18, SAC/FIG4, FAB1 and VAC14. As to expression, expressed in roots, flowers and leaves.

It localises to the preautophagosomal structure membrane. Its subcellular location is the vacuole membrane. The PI(3,5)P2 regulatory complex regulates both the synthesis and turnover of phosphatidylinositol 3,5-bisphosphate (PtdIns(3,5)P2). Required for autophagy. The protein is Autophagy-related protein 18f (ATG18F) of Arabidopsis thaliana (Mouse-ear cress).